The primary structure comprises 563 residues: Sperm-tail PG-rich repeat-containing protein 2 (563 aa).

STPGR repeat units lie at residues 21–34 (VGPG…PKQQ), 63–73 (PGPAHYNVSQA), and 97–107 (GPGPASYDCPY). The interval 131 to 163 (IPSIPSSGKSHGYHLNEDDTIMRRTPPSSDKTM) is disordered. STPGR repeat units lie at residues 200–219 (GPGP…YENI), 250–263 (PGPG…QFDH), 292–321 (TPAP…FGQR), 334–353 (LPGP…QVKK), 423–438 (LPAP…YDMS), 473–483 (GPGPATYNPIL), and 507–518 (SPGPTTYELSPF).

This chain is Sperm-tail PG-rich repeat-containing protein 2 (Stpg2), found in Rattus norvegicus (Rat).